A 729-amino-acid chain; its full sequence is 1,4-alpha-glucan branching enzyme GlgB (729 aa).

The Nucleophile role is filled by D405. The active-site Proton donor is E458.

Belongs to the glycosyl hydrolase 13 family. GlgB subfamily. As to quaternary structure, monomer.

It carries out the reaction Transfers a segment of a (1-&gt;4)-alpha-D-glucan chain to a primary hydroxy group in a similar glucan chain.. Its pathway is glycan biosynthesis; glycogen biosynthesis. In terms of biological role, catalyzes the formation of the alpha-1,6-glucosidic linkages in glycogen by scission of a 1,4-alpha-linked oligosaccharide from growing alpha-1,4-glucan chains and the subsequent attachment of the oligosaccharide to the alpha-1,6 position. This Mannheimia succiniciproducens (strain KCTC 0769BP / MBEL55E) protein is 1,4-alpha-glucan branching enzyme GlgB.